Here is a 311-residue protein sequence, read N- to C-terminus: Methionyl-tRNA formyltransferase (311 aa).

110-113 provides a ligand contact to (6S)-5,6,7,8-tetrahydrofolate; it reads SLLP.

This sequence belongs to the Fmt family.

It carries out the reaction L-methionyl-tRNA(fMet) + (6R)-10-formyltetrahydrofolate = N-formyl-L-methionyl-tRNA(fMet) + (6S)-5,6,7,8-tetrahydrofolate + H(+). In terms of biological role, attaches a formyl group to the free amino group of methionyl-tRNA(fMet). The formyl group appears to play a dual role in the initiator identity of N-formylmethionyl-tRNA by promoting its recognition by IF2 and preventing the misappropriation of this tRNA by the elongation apparatus. This chain is Methionyl-tRNA formyltransferase, found in Streptococcus pyogenes serotype M2 (strain MGAS10270).